Consider the following 361-residue polypeptide: WAT1-related protein At4g01450 (361 aa).

The next 10 membrane-spanning stretches (helical) occupy residues 8-28, 40-60, 76-96, 103-123, 132-152, 177-197, 209-229, 243-263, 273-293, and 298-318; these read WAPM…NALV, VIAT…AYFW, LFVS…LGLS, GSAF…IFGF, IGYG…LLTM, WIKG…WMLI, YSST…LSLI, LTII…TVGM, VVSS…DFLI, and IYLG…IFLW. EamA domains lie at 21–142 and 194–317; these read AGMV…GTLI and WMLI…YIFL.

This sequence belongs to the drug/metabolite transporter (DMT) superfamily. Plant drug/metabolite exporter (P-DME) (TC 2.A.7.4) family.

It localises to the membrane. The sequence is that of WAT1-related protein At4g01450 from Arabidopsis thaliana (Mouse-ear cress).